A 2513-amino-acid polypeptide reads, in one-letter code: Polyprotein P1234 (2513 aa).

The Alphavirus-like MT domain maps to 28 to 259; that stretch reads EPKQVTPNDH…ESRKLLQSWH (232 aa). The nsP1 membrane-binding stretch occupies residues 244–263; sequence GSTLYPESRKLLQSWHLPSV. Residues Cys-417 and Cys-419 are each lipidated (S-palmitoyl cysteine; by host). A (+)RNA virus helicase ATP-binding domain is found at 690 to 842; sequence DLTSPPYHEF…HNICTQVYHK (153 aa). An a ribonucleoside 5'-triphosphate-binding site is contributed by 721–728; it reads GVPGSGKS. Residues 843–991 form the (+)RNA virus helicase C-terminal domain; sequence SISRRCTLPV…IKEWEAEHAS (149 aa). One can recognise a Peptidase C9 domain in the interval 1004-1327; that stretch reads DTFQNKANVC…NQLNAVYAGL (324 aa). The nucleolus localization signal stretch occupies residues 1005–1024; that stretch reads TFQNKANVCWAKCLVPILDT. Catalysis depends on Cys-1013, which acts as the For cysteine protease nsP2 activity. The Nuclear export signal motif lies at 1058 to 1067; sequence TRIYGVDLDS. His-1083 serves as the catalytic For cysteine protease nsP2 activity. The Nuclear localization signal motif lies at 1182–1186; that stretch reads PTKRV. 6 residues coordinate ADP-D-ribose: Asp-1343, Asn-1357, Gly-1365, Gly-1445, Val-1446, and Tyr-1447. Residues Cys-1595, Cys-1597, Cys-1620, and Cys-1638 each contribute to the Zn(2+) site. 2 short sequence motifs (FGDF; binding to host G3BP1) span residues 1851 to 1854 and 1869 to 1872; these read FGDF. The 116-residue stretch at 2267–2382 folds into the RdRp catalytic domain; that stretch reads DAVLETDIAS…HGVVSDALMA (116 aa).

In terms of assembly, interacts with non-structural protein 3. Interacts with RNA-directed RNA polymerase nsP4. Interacts with protease nsP2. interacts with itself. As to quaternary structure, interacts with mRNA-capping enzyme nsP1. Interacts with host DDX1. Interacts with host DDX3. Interacts (via C-terminus) with host G3BP1; this interaction inhibits the formation of host stress granules on viral mRNAs and the nsp3-G3BP1 complexes bind viral RNAs and probably orchestrate the assembly of viral replication complexes. Interacts (via C-terminus) with host G3BP2; this interaction inhibits the formation of host stress granules on viral mRNAs and the nsp3-G3BP2 complexes bind viral RNAs and probably orchestrate the assembly of viral replication complexes. Interacts with mRNA-capping enzyme nsP1. Interacts with protease nsP2. interacts with itself. In terms of assembly, interacts with RNA-directed RNA polymerase nsP4. Interacts with mRNA-capping enzyme nsP1. Interacts with KPNA1/karyopherin-alpha1; this interaction probably allows the active transport of protease nsP2 into the host nucleus. Mg(2+) is required as a cofactor. The cofactor is Mn(2+). In terms of processing, specific enzymatic cleavages in vivo yield mature proteins. The processing of the polyprotein is temporally regulated. In early stages (1.7 hpi), P1234 is first cleaved in trans through its nsP2 protease activity, releasing P123 and nsP4, which associate to form the early replication complex. At the same time, P1234 is also cut at the nsP1/nsP2 site early in infection but with lower efficiency. After replication of the viral minus-strand RNAs (4 hpi), the polyproteins are cut at the nsP1/nsP2 and nsP2/nsP3 sites very efficiently, preventing accumulation of P123 and P1234 and allowing the formation of the late replication complex. NsP3/nsP4 site is not cleaved anymore and P34 is produced rather than nsP4. Specific enzymatic cleavages in vivo yield mature proteins. The processing of the polyprotein is temporally regulated. In early stages (1.7 hpi), P123 is cleaved at the nsP1/nsP2 site with low efficiency. After replication of the viral minus-strand RNAs (4 hpi), the polyproteins are cut at the nsP1/nsP2 and nsP2/nsP3 sites very efficiently, preventing accumulation of P123 and allowing the formation of the late replication complex. Post-translationally, palmitoylated by host palmitoyltransferases ZDHHC2 and ZDHHC19. In terms of processing, phosphorylated by host on serines and threonines. Ubiquitinated; targets the protein for rapid degradation via the ubiquitin system. Nsp4 is present in extremely low quantities due to low frequency of translation through the amber stop-codon and the degradation by the ubiquitin pathway.

It is found in the host cytoplasmic vesicle membrane. It localises to the host cell membrane. The protein resides in the host cell projection. Its subcellular location is the host filopodium. The protein localises to the host nucleus. It is found in the host cytoplasm. It carries out the reaction GTP + S-adenosyl-L-methionine = N(7)-methyl-GTP + S-adenosyl-L-homocysteine. The catalysed reaction is N(7)-methyl-GTP + L-histidyl-[protein] = N(tele)-(N(7)-methylguanosine 5'-phospho)-L-histidyl-[protein] + diphosphate. It catalyses the reaction N(tele)-(N(7)-methylguanosine 5'-phospho)-L-histidyl-[protein] + a 5'-end diphospho-(purine-ribonucleoside) in mRNA + H(+) = a 5'-end (N(7)-methyl 5'-triphosphoguanosine)-(purine-ribonucleoside) in mRNA + L-histidyl-[protein]. The enzyme catalyses a 5'-end triphospho-ribonucleoside in mRNA + H2O = a 5'-end diphospho-ribonucleoside in mRNA + phosphate + H(+). It carries out the reaction a ribonucleoside 5'-triphosphate + H2O = a ribonucleoside 5'-diphosphate + phosphate + H(+). The catalysed reaction is ATP + H2O = ADP + phosphate + H(+). It catalyses the reaction RNA(n) + a ribonucleoside 5'-triphosphate = RNA(n+1) + diphosphate. The enzyme catalyses 4-O-(ADP-D-ribosyl)-L-aspartyl-[protein] + H2O = L-aspartyl-[protein] + ADP-D-ribose + H(+). It carries out the reaction 5-O-(ADP-D-ribosyl)-L-glutamyl-[protein] + H2O = L-glutamyl-[protein] + ADP-D-ribose + H(+). The catalysed reaction is RNA(n) + ATP = RNA(n)-3'-adenine ribonucleotide + diphosphate. It catalyses the reaction ADP-alpha-D-ribose 1''-phosphate + H2O = ADP-D-ribose + phosphate. Functionally, inactive precursor of the viral replicase, which is activated by cleavages carried out by the viral protease nsP2. In terms of biological role, the early replication complex formed by the polyprotein P123 and nsP4 synthesizes minus-strand RNAs. As soon P123 is cleaved into mature proteins, the plus-strand RNAs synthesis begins. Cytoplasmic capping enzyme that catalyzes two virus-specific reactions: methyltransferase and nsP1 guanylyltransferase. mRNA-capping is necessary since all viral RNAs are synthesized in the cytoplasm, and host capping enzymes are restricted to the nucleus. The enzymatic reaction involves a covalent link between 7-methyl-GMP and nsP1, whereas eukaryotic capping enzymes form a covalent complex only with GMP. nsP1 capping consists in the following reactions: GTP is first methylated into 7-methyl-GMP and then is covalently linked to nsP1 to form the m7GMp-nsP1 complex from which 7-methyl-GMP complex is transferred to the mRNA to create the cap structure. NsP1 is also needed for the initiation of the minus-strand RNAs synthesis. Probably serves as a membrane anchor for the replication complex composed of nsP1-nsP4. Palmitoylated nsP1 is remodeling host cell cytoskeleton, and induces filopodium-like structure formation at the surface of the host cell. Its function is as follows. Multifunctional protein whose N-terminus is part of the RNA polymerase complex and displays NTPase, RNA triphosphatase and helicase activities. NTPase and RNA triphosphatase are involved in viral RNA capping and helicase keeps a check on the dsRNA replication intermediates. The C-terminus harbors a protease that specifically cleaves the polyproteins and releases the mature proteins. Required for the shutoff of minus-strand RNAs synthesis. Specifically inhibits the host IFN response by promoting the nuclear export of host STAT1. Also inhibits host transcription by inducing the rapid proteasome-dependent degradation of POLR2A, a catalytic subunit of the RNAPII complex. The resulting inhibition of cellular protein synthesis serves to ensure maximal viral gene expression and to evade host immune response. Functionally, seems to be essential for minus-strand RNAs and subgenomic 26S mRNAs synthesis. Displays mono-ADP-ribosylhydrolase activity. ADP-ribosylation is a post-translational modification that controls various processes of the host cell and the virus probably needs to revert it for optimal viral replication. Binds proteins of G3BP family and sequesters them into the viral RNA replication complexes thereby inhibiting the formation of host stress granules on viral mRNAs. The nsp3-G3BP complexes bind viral RNAs and probably orchestrate the assembly of viral replication complexes, thanks to the ability of G3BP family members to self-assemble and bind DNA. In terms of biological role, RNA dependent RNA polymerase. Replicates genomic and antigenomic RNA by recognizing replications specific signals. The early replication complex formed by the polyprotein P123 and nsP4 synthesizes minus-strand RNAs. The late replication complex composed of fully processed nsP1-nsP4 is responsible for the production of genomic and subgenomic plus-strand RNAs. In Anopheles (Human), this protein is Polyprotein P1234.